The primary structure comprises 160 residues: Cytochrome b6-f complex subunit 4 (160 aa).

3 consecutive transmembrane segments (helical) span residues 36–56 (LLYV…GLAI), 95–115 (LLGV…PFIE), and 131–151 (TIFL…TMPI).

The protein belongs to the cytochrome b family. PetD subfamily. In terms of assembly, the 4 large subunits of the cytochrome b6-f complex are cytochrome b6, subunit IV (17 kDa polypeptide, petD), cytochrome f and the Rieske protein, while the 4 small subunits are petG, petL, petM and petN. The complex functions as a dimer.

It is found in the plastid. The protein localises to the chloroplast thylakoid membrane. Functionally, component of the cytochrome b6-f complex, which mediates electron transfer between photosystem II (PSII) and photosystem I (PSI), cyclic electron flow around PSI, and state transitions. This is Cytochrome b6-f complex subunit 4 from Porphyra purpurea (Red seaweed).